Reading from the N-terminus, the 57-residue chain is Potassium channel toxin MeuTXKalpha2 (57 aa).

The signal sequence occupies residues 1 to 19; it reads MSRLYAIILIALVFNVIMT. The propeptide occupies 20-28; it reads IMPDMKVEA. Intrachain disulfides connect Cys31/Cys47, Cys34/Cys52, and Cys38/Cys54.

It belongs to the short scorpion toxin superfamily. Potassium channel inhibitor family. Alpha-KTx 08 subfamily. As to expression, expressed by the venom gland.

The protein resides in the secreted. Its function is as follows. Inhibits Kv1.1/KCNA1, Kv1.3/KCNA3 and Shaker potassium channels. The sequence is that of Potassium channel toxin MeuTXKalpha2 from Mesobuthus eupeus (Lesser Asian scorpion).